A 367-amino-acid chain; its full sequence is uncharacterized protein (367 aa).

This sequence belongs to the mimivirus L17x/L18x family.

This is an uncharacterized protein from Acanthamoeba polyphaga mimivirus (APMV).